The following is a 167-amino-acid chain: SsrA-binding protein (167 aa).

The span at 139–158 (QNHDKRDAAKDRDWQRDKQR) shows a compositional bias: basic and acidic residues. Residues 139–167 (QNHDKRDAAKDRDWQRDKQRVMRRHNRDA) are disordered.

This sequence belongs to the SmpB family.

It is found in the cytoplasm. Required for rescue of stalled ribosomes mediated by trans-translation. Binds to transfer-messenger RNA (tmRNA), required for stable association of tmRNA with ribosomes. tmRNA and SmpB together mimic tRNA shape, replacing the anticodon stem-loop with SmpB. tmRNA is encoded by the ssrA gene; the 2 termini fold to resemble tRNA(Ala) and it encodes a 'tag peptide', a short internal open reading frame. During trans-translation Ala-aminoacylated tmRNA acts like a tRNA, entering the A-site of stalled ribosomes, displacing the stalled mRNA. The ribosome then switches to translate the ORF on the tmRNA; the nascent peptide is terminated with the 'tag peptide' encoded by the tmRNA and targeted for degradation. The ribosome is freed to recommence translation, which seems to be the essential function of trans-translation. This is SsrA-binding protein from Xanthomonas axonopodis pv. citri (strain 306).